We begin with the raw amino-acid sequence, 184 residues long: Adenine phosphoribosyltransferase (184 aa).

This sequence belongs to the purine/pyrimidine phosphoribosyltransferase family. As to quaternary structure, homodimer.

The protein localises to the cytoplasm. It catalyses the reaction AMP + diphosphate = 5-phospho-alpha-D-ribose 1-diphosphate + adenine. It participates in purine metabolism; AMP biosynthesis via salvage pathway; AMP from adenine: step 1/1. Catalyzes a salvage reaction resulting in the formation of AMP, that is energically less costly than de novo synthesis. In Acidovorax sp. (strain JS42), this protein is Adenine phosphoribosyltransferase.